A 364-amino-acid polypeptide reads, in one-letter code: Fructose-bisphosphate aldolase C (364 aa).

A Phosphotyrosine modification is found at Y5. Residues S36, S39, and S45 each carry the phosphoserine modification. Substrate is bound at residue R56. Residue K111 is modified to N6-acetyllysine. S132 is modified (phosphoserine). K147 contributes to the substrate binding site. The active-site Proton acceptor is E188. K230 functions as the Schiff-base intermediate with dihydroxyacetone-P in the catalytic mechanism.

Belongs to the class I fructose-bisphosphate aldolase family. Homotetramer. Interacts with ATP6V1E1.

The enzyme catalyses beta-D-fructose 1,6-bisphosphate = D-glyceraldehyde 3-phosphate + dihydroxyacetone phosphate. It functions in the pathway carbohydrate degradation; glycolysis; D-glyceraldehyde 3-phosphate and glycerone phosphate from D-glucose: step 4/4. This Pan troglodytes (Chimpanzee) protein is Fructose-bisphosphate aldolase C (ALDOC).